The following is a 359-amino-acid chain: Probable dual-specificity RNA methyltransferase RlmN (359 aa).

E100 (proton acceptor) is an active-site residue. The Radical SAM core domain maps to 106 to 340; it reads TDKRLTVCVS…VSVRASRGRD (235 aa). A disulfide bond links C113 and C345. 3 residues coordinate [4Fe-4S] cluster: C120, C124, and C127. S-adenosyl-L-methionine-binding positions include 167–168, S197, 226–228, and N302; these read GE and SLH. C345 acts as the S-methylcysteine intermediate in catalysis.

The protein belongs to the radical SAM superfamily. RlmN family. [4Fe-4S] cluster serves as cofactor.

It localises to the cytoplasm. It catalyses the reaction adenosine(2503) in 23S rRNA + 2 reduced [2Fe-2S]-[ferredoxin] + 2 S-adenosyl-L-methionine = 2-methyladenosine(2503) in 23S rRNA + 5'-deoxyadenosine + L-methionine + 2 oxidized [2Fe-2S]-[ferredoxin] + S-adenosyl-L-homocysteine. The catalysed reaction is adenosine(37) in tRNA + 2 reduced [2Fe-2S]-[ferredoxin] + 2 S-adenosyl-L-methionine = 2-methyladenosine(37) in tRNA + 5'-deoxyadenosine + L-methionine + 2 oxidized [2Fe-2S]-[ferredoxin] + S-adenosyl-L-homocysteine. Specifically methylates position 2 of adenine 2503 in 23S rRNA and position 2 of adenine 37 in tRNAs. This is Probable dual-specificity RNA methyltransferase RlmN from Prochlorococcus marinus (strain NATL1A).